A 90-amino-acid polypeptide reads, in one-letter code: Putative regulatory protein Dred_1699 (90 aa).

The protein belongs to the RemA family.

In Desulforamulus reducens (strain ATCC BAA-1160 / DSM 100696 / MI-1) (Desulfotomaculum reducens), this protein is Putative regulatory protein Dred_1699.